Here is a 293-residue protein sequence, read N- to C-terminus: Mitochondrial glycine transporter (293 aa).

3 Solcar repeats span residues 6–85 (GGVP…SRSA), 102–186 (LQSY…AKEM), and 208–291 (ASAM…LLKL). A run of 6 helical transmembrane segments spans residues 12–37 (LVSG…TRLQ), 60–86 (GTLP…RSAL), 108–133 (LLTG…VRYE), 161–184 (GAAA…EQAK), 212–238 (VNGV…KTRM), and 266–284 (GLSL…AWGI).

It belongs to the mitochondrial carrier (TC 2.A.29) family. SLC25A38 subfamily.

It localises to the mitochondrion inner membrane. It catalyses the reaction glycine(in) = glycine(out). Functionally, mitochondrial glycine transporter that imports glycine into the mitochondrial matrix. Plays an important role in providing glycine for the first enzymatic step in heme biosynthesis, the condensation of glycine with succinyl-CoA to produce 5-aminolevulinate (ALA) in the mitochondrial matrix. In Eremothecium gossypii (strain ATCC 10895 / CBS 109.51 / FGSC 9923 / NRRL Y-1056) (Yeast), this protein is Mitochondrial glycine transporter.